The chain runs to 352 residues: Dead end protein homolog 1 (352 aa).

RRM domains follow at residues 58-136 (SEVY…RSTE) and 138-218 (CELT…WLKP). An Omega-N-methylarginine modification is found at Arg-336.

In terms of assembly, interacts with APOBEC3. Isoform 1 and isoform 2 are expressed in testis. Isoform 1 is expressed continuously in post natal (PN) testis although levels are low between PN1 to PN6. Isoform 2 is expressed from PN 20 onwards. Isoform 2 is strongly expressed in meiotic and in post-meiotic germ cells of the testis with highest expression at the elongated spermatid stage (at protein level). Expressed in testis and heart. Expressed in germ cells and genital ridges. Not detected in testicular tumors.

The protein localises to the nucleus. It is found in the cytoplasm. In terms of biological role, RNA-binding factor that positively regulates gene expression by prohibiting miRNA-mediated gene suppression. Relieves miRNA repression in germline cells. Prohibits the function of several miRNAs by blocking the accessibility of target mRNAs. Sequence-specific RNA-binding factor that binds specifically to U-rich regions (URRs) in the 3' untranslated region (3'-UTR) of several mRNAs. Does not bind to miRNAs. Isoform 1 may play a role during primordial germ cell (PGC) survival. However, does not seem to be essential for PGC migration. The polypeptide is Dead end protein homolog 1 (Dnd1) (Mus musculus (Mouse)).